Here is a 735-residue protein sequence, read N- to C-terminus: MPRQDPAVTPELVASHGLKPDEYQRILDLIGRVPTFTELGIFSAMWNEHCSYKSSRLHLRALPTKAPWVIQGPGENAGVIDIGDGEACVFKMESHNHPSYIEPFQGAATGVGGILRDVFTMGARPVACLNLLRFGAPEHPKTRHLVSGVVAGIGSYGNSFGVPTVGGATAFHMGYDGNILVNAMAVGIARADEIFYAKATGIGNPIVYLGSKTGRDGIHGATMASAAFEEDAEAKRPTVQVGDPFTEKLLLEACLELMRTGAVIAIQDMGAAGLTSSAVEMGAKGDLGIELDLDAVPCRETGMSAYEMLLSESQERMLMVLDPQKEAEAKAVFVKWGLDFAIIGKTTDTLRFVVKHEGEVKADLPIKQLGDAAPLYDRPHIASPALEKIEAAAIEPPLSNAGALALLLATPDLCSKRWIYEQYDHLILGNSVETPGGDAAVIRLGDGPKGLALTTDVTPRYCEADPVAGGRQAVAEAWRNLTAVGALPRAVTDNLNFGNPEKPEIMGQFVGCLTGIGEACRALDFPIVSGNVSLYNESSGKGIPPTPSIGGVGVIADVGLAAKLAFRRAGDAILLIGDTEGWLGQSLYLRDVCGREAGAPPPVDLAAEKRNGDFVRELIRAALVSAVHDISDGGLAVALAEMAMAGGVGASVEAPANVPAHGFWFGEDQSRYIVATSPERALGVLAAAQRAGVPCRRIGETGGAALTLKGEAAILIADLSARFEGWLPDYMAAAL.

His-49 is a catalytic residue. Residues Tyr-52 and Lys-91 each contribute to the ATP site. Position 93 (Glu-93) interacts with Mg(2+). Residues 94–97 and Arg-116 contribute to the substrate site; that span reads SHNH. His-95 acts as the Proton acceptor in catalysis. Asp-117 contacts Mg(2+). Gln-240 provides a ligand contact to substrate. Asp-268 contributes to the Mg(2+) binding site. Substrate is bound at residue 312 to 314; sequence ESQ. Asp-493 and Gly-530 together coordinate ATP. Asn-531 contributes to the Mg(2+) binding site. Position 533 (Ser-533) interacts with substrate.

This sequence belongs to the FGAMS family. Monomer. Part of the FGAM synthase complex composed of 1 PurL, 1 PurQ and 2 PurS subunits.

It is found in the cytoplasm. It catalyses the reaction N(2)-formyl-N(1)-(5-phospho-beta-D-ribosyl)glycinamide + L-glutamine + ATP + H2O = 2-formamido-N(1)-(5-O-phospho-beta-D-ribosyl)acetamidine + L-glutamate + ADP + phosphate + H(+). It functions in the pathway purine metabolism; IMP biosynthesis via de novo pathway; 5-amino-1-(5-phospho-D-ribosyl)imidazole from N(2)-formyl-N(1)-(5-phospho-D-ribosyl)glycinamide: step 1/2. Part of the phosphoribosylformylglycinamidine synthase complex involved in the purines biosynthetic pathway. Catalyzes the ATP-dependent conversion of formylglycinamide ribonucleotide (FGAR) and glutamine to yield formylglycinamidine ribonucleotide (FGAM) and glutamate. The FGAM synthase complex is composed of three subunits. PurQ produces an ammonia molecule by converting glutamine to glutamate. PurL transfers the ammonia molecule to FGAR to form FGAM in an ATP-dependent manner. PurS interacts with PurQ and PurL and is thought to assist in the transfer of the ammonia molecule from PurQ to PurL. The protein is Phosphoribosylformylglycinamidine synthase subunit PurL of Methylocella silvestris (strain DSM 15510 / CIP 108128 / LMG 27833 / NCIMB 13906 / BL2).